The chain runs to 107 residues: Probable antitoxin TacA (107 aa).

The protein belongs to the TacA antitoxin family. Forms a complex with cognate antitoxin TacT.

Its function is as follows. Probable antitoxin component of a type II toxin-antitoxin (TA) system. Should neutralize cognate toxin TacT (y4aS). The chain is Probable antitoxin TacA from Sinorhizobium fredii (strain NBRC 101917 / NGR234).